A 79-amino-acid chain; its full sequence is RNA-binding protein Hfq (79 aa).

A Sm domain is found at 10-69; the sequence is DPFLNALRKEHVPVSIYLVNGIKLQGNIESFDQYVVLLRNTVTQMVYKHAISTVVPARAV.

This sequence belongs to the Hfq family. Homohexamer.

Functionally, RNA chaperone that binds small regulatory RNA (sRNAs) and mRNAs to facilitate mRNA translational regulation in response to envelope stress, environmental stress and changes in metabolite concentrations. Also binds with high specificity to tRNAs. The sequence is that of RNA-binding protein Hfq from Cupriavidus metallidurans (strain ATCC 43123 / DSM 2839 / NBRC 102507 / CH34) (Ralstonia metallidurans).